A 162-amino-acid polypeptide reads, in one-letter code: Anthrone oxygenase nsrD (162 aa).

The next 3 helical transmembrane spans lie at 17–37 (FLSG…LDTI), 54–74 (GSIY…YVAL), and 86–106 (PYVL…WVMV). Residue asparagine 109 is glycosylated (N-linked (GlcNAc...) asparagine). Residues 130–150 (LVVKWAWLHVVRSLYPLFGAF) form a helical membrane-spanning segment.

This sequence belongs to the anthrone oxygenase family.

It is found in the membrane. The enzyme catalyses emodin anthrone + O2 = emodin + H2O + H(+). The protein operates within secondary metabolite biosynthesis. Anthrone oxygenase; part of the gene cluster that mediates the biosynthesis of the tetrahydroxanthone dimer neosartorin, which exhibits antibacterial activity. The two different monomeric units appear to be synthesized by the same set of enzymes, among which the Baeyer-Villiger monooxygenase nsrF is the key enzyme for the divergence of the biosynthetic routes. The pathway begins with the synthesis of atrochrysone thioester by the polyketide synthase nsrB. The atrochrysone carboxyl ACP thioesterase nsrC then breaks the thioester bond and releases the atrochrysone carboxylic acid from AacuL. Atrochrysone carboxylic acid is decarboxylated by the decarboxylase nsrE, and oxidized by the anthrone oxygenase nsrD to yield emodin. Emodin is then reduced to emodin hydroquinone by the oxidoreductase nsrR. A-ring reduction by the short chain dehydrogenase nsrJ, dehydration by the scytalone dehydratase-like protein nsrI and probable spontaneous re-oxidation, results in overall deoxygenation to chrysophanol. The Baeyer-Villiger monooxygenase nsrF accepts chrysophanol as a substrate to insert one oxygen atom at two different positions to yield the precursors of both monomric units. NsrF is promiscuous/flexible in interacting with the 2 (non methylated and methylated) aromatic rings of chrysophanol, thus diverging the biosynthetic pathway at this point. After the hydrolysis of the lactones, methylesterification by the methyltransferase nsrG yields respectively moniliphenone and 2,2',6'-trihydroxy-4-methyl-6-methoxya-cyldiphenylmethanone. The next steps are the hydroxylation by the FAD-dependent monooxygenase nsrK, followed by isomerization by the monooxygenase nsrQ. The short chain dehydrogenase/reductase nsrO then catalyzes the C-5 ketoreduction to give the xanthone skeleton of blennolide C and 5-acetylblennolide A. The acetyltransferase nsrL has a strict substrate specificity and uses only blennolide A but not blennolide C to yield 5-acetylblennolide A as the single-acetylated product. In the final step of the biosynthesis, the heterodimerization of the 2 xanthones, blennolide C and 5-acetylblennolide A, is catalyzed by the cytochrome P450 monooxygenase nsrP. NsrP can utilize at least three different xanthones as its substrates to perform the dimerization reaction. This chain is Anthrone oxygenase nsrD, found in Aspergillus novofumigatus (strain IBT 16806).